The primary structure comprises 516 residues: Zinc finger protein 83 (516 aa).

Positions 1–20 are disordered; sequence MHGRKDDAQKQPVKNQLGLN. The segment at 93–115 adopts a C2H2-type 1; degenerate zinc-finger fold; the sequence is YKCSERGKAFHQGLHFTIHQIIH. 14 C2H2-type zinc fingers span residues 121-143, 149-171, 177-199, 205-227, 233-255, 261-283, 289-311, 317-339, 345-367, 373-395, 401-423, 429-451, 457-479, and 485-507; these read FKCDICGKIFNKKSNLASHQRIH, YKCNECGKVFHNMSHLAQHRRIH, YKCNECGKVFNQISHLAQHQRIH, YKCNECGKVFHQISHLAQHRTIH, YECNKCGKVFSRNSYLVQHLIIH, YRCNVCGKVFHHISHLAQHQRIH, YKCNECGKVFSHKSSLVNHWRIH, YKCNECGKVFSRNSYLAQHLIIH, YKCDECDKAFSQNSHLVQHHRIH, YKCDECGKVFSQNSYLAYHWRIH, YKCNECGKVFGLNSSLAHHRKIH, FKCNECGKAFSMRSSLTNHHAIH, and FKCNECGKLFRDNSYLVRHQRFH.

Belongs to the krueppel C2H2-type zinc-finger protein family.

It is found in the nucleus. In terms of biological role, may be involved in transcriptional regulation. The chain is Zinc finger protein 83 (ZNF83) from Homo sapiens (Human).